We begin with the raw amino-acid sequence, 333 residues long: Fructose-1,6-bisphosphatase class 1 (333 aa).

Positions 90, 112, 114, and 115 each coordinate Mg(2+). Substrate is bound by residues 115-118 (DGSS), Asn-207, and Lys-273. Glu-279 is a binding site for Mg(2+).

Belongs to the FBPase class 1 family. In terms of assembly, homotetramer. Requires Mg(2+) as cofactor.

Its subcellular location is the cytoplasm. It catalyses the reaction beta-D-fructose 1,6-bisphosphate + H2O = beta-D-fructose 6-phosphate + phosphate. Its pathway is carbohydrate biosynthesis; gluconeogenesis. The protein is Fructose-1,6-bisphosphatase class 1 of Aromatoleum aromaticum (strain DSM 19018 / LMG 30748 / EbN1) (Azoarcus sp. (strain EbN1)).